A 182-amino-acid chain; its full sequence is Crossover junction endodeoxyribonuclease RuvC (182 aa).

Active-site residues include aspartate 7, glutamate 69, and aspartate 141. Mg(2+)-binding residues include aspartate 7, glutamate 69, and aspartate 141.

It belongs to the RuvC family. As to quaternary structure, homodimer which binds Holliday junction (HJ) DNA. The HJ becomes 2-fold symmetrical on binding to RuvC with unstacked arms; it has a different conformation from HJ DNA in complex with RuvA. In the full resolvosome a probable DNA-RuvA(4)-RuvB(12)-RuvC(2) complex forms which resolves the HJ. Mg(2+) serves as cofactor.

Its subcellular location is the cytoplasm. It carries out the reaction Endonucleolytic cleavage at a junction such as a reciprocal single-stranded crossover between two homologous DNA duplexes (Holliday junction).. Its function is as follows. The RuvA-RuvB-RuvC complex processes Holliday junction (HJ) DNA during genetic recombination and DNA repair. Endonuclease that resolves HJ intermediates. Cleaves cruciform DNA by making single-stranded nicks across the HJ at symmetrical positions within the homologous arms, yielding a 5'-phosphate and a 3'-hydroxyl group; requires a central core of homology in the junction. The consensus cleavage sequence is 5'-(A/T)TT(C/G)-3'. Cleavage occurs on the 3'-side of the TT dinucleotide at the point of strand exchange. HJ branch migration catalyzed by RuvA-RuvB allows RuvC to scan DNA until it finds its consensus sequence, where it cleaves and resolves the cruciform DNA. The chain is Crossover junction endodeoxyribonuclease RuvC from Albidiferax ferrireducens (strain ATCC BAA-621 / DSM 15236 / T118) (Rhodoferax ferrireducens).